The following is a 235-amino-acid chain: Large ribosomal subunit protein uL1c (235 aa).

Belongs to the universal ribosomal protein uL1 family. In terms of assembly, part of the 50S ribosomal subunit.

It localises to the plastid. The protein localises to the chloroplast. Its function is as follows. Binds directly to 23S rRNA. Might be involved in E site tRNA release (Potential). This Gracilaria tenuistipitata var. liui (Red alga) protein is Large ribosomal subunit protein uL1c (rpl1).